The chain runs to 387 residues: MAPNLSPNPSNSLDAFAAEKLAGLEAAALRRRLAVTARGPEAAAERGGRRLVSFSCNDYLGLAHDPRVIAAASDALRRYGAGAGASRLVTGNSPPLAALEERLARHKGKEAALVFGSGYLANLGIAPALVGQGDLILIDDLGHSCLFAGARMSGALTLRFTHNDVAQLRALLAEQRGAARRALILTERVFSMDGDRAPLAEILALAGAYDAWTLVDDAHGLGVVEPGQRAPLEMGTLSKTLGSYGGYLCASRAVIDLLTSRARSLVYTTGLPPASAAAALKALEIVEAEPEHAARPLMLARRFTARLGLPEATSPIVPVLVGAAESALALSAALEARGFLVVAIRPPTVAPGTARLRVAFSAAHDAAQVDALAEALAELAPDSLRAA.

Substrate-binding residues include R31 and R38. 118–119 contacts pyridoxal 5'-phosphate; the sequence is GY. H143 serves as a coordination point for substrate. Residues S191, 216-219, and 236-239 contribute to the pyridoxal 5'-phosphate site; these read DDAH and TLSK. Position 239 is an N6-(pyridoxal phosphate)lysine (K239). T348 lines the substrate pocket.

The protein belongs to the class-II pyridoxal-phosphate-dependent aminotransferase family. BioF subfamily. In terms of assembly, homodimer. The cofactor is pyridoxal 5'-phosphate.

It carries out the reaction 6-carboxyhexanoyl-[ACP] + L-alanine + H(+) = (8S)-8-amino-7-oxononanoate + holo-[ACP] + CO2. It participates in cofactor biosynthesis; biotin biosynthesis. In terms of biological role, catalyzes the decarboxylative condensation of pimeloyl-[acyl-carrier protein] and L-alanine to produce 8-amino-7-oxononanoate (AON), [acyl-carrier protein], and carbon dioxide. The protein is 8-amino-7-oxononanoate synthase of Methylorubrum populi (strain ATCC BAA-705 / NCIMB 13946 / BJ001) (Methylobacterium populi).